A 742-amino-acid polypeptide reads, in one-letter code: Two-component response regulator-like PRR37 (742 aa).

The 119-residue stretch at 63-181 (KVLLVDSDDS…ELKNLWQHVW (119 aa)) folds into the Response regulatory domain. Over residues 186-195 (SSSGSGSESG) the composition is skewed to low complexity. Disordered stretches follow at residues 186–249 (SSSG…SWTK), 290–346 (PCTS…PLQN), 375–402 (DAQQ…NRDN), 478–570 (MKSN…VQSN), 590–671 (NGGS…GNDM), and 697–742 (NFGK…AADR). The span at 236-248 (DNGSGTQAQSSWT) shows a compositional bias: polar residues. Basic and acidic residues predominate over residues 299-313 (KQKETNDDFKGKDLE). The segment covering 318–330 (RNLNTAYQSSPNE) has biased composition (polar residues). A compositionally biased stretch (basic and acidic residues) spans 331–341 (RSIKPTDRRNE). Over residues 380 to 390 (ARATNAPNCSS) the composition is skewed to polar residues. Positions 490-502 (GSNGSSNNNDMGS) are enriched in low complexity. Residues 503–512 (TTKNVVTKPS) are compositionally biased toward polar residues. Residues 618–634 (NGSNSGSNNGSNGQNGS) are compositionally biased toward low complexity. The segment covering 656 to 667 (GPGGGNGSGSGS) has biased composition (gly residues). Residues 682-724 (RVAAVIKFRQKRKERNFGKKVRYQSRKRLAEQRPRVRGQFVRQ) form the CCT domain. Positions 697–708 (NFGKKVRYQSRK) are enriched in basic residues. Low complexity predominate over residues 719–731 (GQFVRQAVQDQQQ).

It belongs to the ARR-like family.

It is found in the nucleus. Its function is as follows. Controls photoperiodic flowering response. Seems to be one of the component of the circadian clock. Expression of several members of the ARR-like family is controlled by circadian rhythm. The particular coordinated sequential expression of PRR73, PRR37, PRR95, PRR59 and PPR1 result to circadian waves that may be at the basis of the endogenous circadian clock. This Oryza sativa subsp. indica (Rice) protein is Two-component response regulator-like PRR37 (PRR37).